We begin with the raw amino-acid sequence, 335 residues long: Galactosylgalactosylxylosylprotein 3-beta-glucuronosyltransferase 3 (335 aa).

Residues M1 to N7 are Cytoplasmic-facing. Residues V8–G28 form a helical; Signal-anchor for type II membrane protein membrane-spanning segment. The Lumenal portion of the chain corresponds to Q29–V335. D196 contacts Mn(2+). The active-site Proton acceptor is the E281. A glycan (N-linked (GlcNAc...) asparagine) is linked at N300. A compositionally biased stretch (basic and acidic residues) spans E312–L322. Residues E312–V335 are disordered.

This sequence belongs to the glycosyltransferase 43 family. In terms of assembly, homodimer; disulfide-linked. Interacts with PXYLP1; the interaction increases the 2-phosphoxylose phosphatase activity of PXYLP1 during completion of linkage region formation in a B3GAT3-mediated manner. Requires Mn(2+) as cofactor. N-glycosylated. Liver, brain and heart. Moderate expression seen in lung, skeletal muscle, kidney and testis.

Its subcellular location is the golgi apparatus membrane. It is found in the golgi apparatus. It localises to the cis-Golgi network. The enzyme catalyses 3-O-(beta-D-galactosyl-(1-&gt;3)-beta-D-galactosyl-(1-&gt;4)-beta-D-xylosyl)-L-seryl-[protein] + UDP-alpha-D-glucuronate = 3-O-(beta-D-GlcA-(1-&gt;3)-beta-D-Gal-(1-&gt;3)-beta-D-Gal-(1-&gt;4)-beta-D-Xyl)-L-seryl-[protein] + UDP + H(+). It functions in the pathway protein modification; protein glycosylation. In terms of biological role, glycosaminoglycans biosynthesis. Involved in forming the linkage tetrasaccharide present in heparan sulfate and chondroitin sulfate. Transfers a glucuronic acid moiety from the uridine diphosphate-glucuronic acid (UDP-GlcUA) to the common linkage region trisaccharide Gal-beta-1,3-Gal-beta-1,4-Xyl covalently bound to a Ser residue at the glycosaminylglycan attachment site of proteoglycans. Can also play a role in the biosynthesis of l2/HNK-1 carbohydrate epitope on glycoproteins. Highest activity seen with Gal-beta-1,3-Gal-beta-O-R (where R=naphthalenemethanol or benzyl alcohol). Stimulates 2-phosphoxylose phosphatase activity of PXYLP1 in presence of uridine diphosphate-glucuronic acid (UDP-GlcUA) during completion of linkage region formation. The polypeptide is Galactosylgalactosylxylosylprotein 3-beta-glucuronosyltransferase 3 (B3GAT3) (Cricetulus griseus (Chinese hamster)).